The sequence spans 218 residues: Pyridoxine/pyridoxamine 5'-phosphate oxidase (218 aa).

Residues 14 to 17 (RREY) and Lys72 each bind substrate. FMN is bound by residues 67–72 (RIVLLK), 82–83 (YT), Arg88, Lys89, and Gln111. Substrate-binding residues include Tyr129, Arg133, and Ser137. FMN contacts are provided by residues 146–147 (QS) and Trp191. 197–199 (RLH) serves as a coordination point for substrate. FMN is bound at residue Arg201.

This sequence belongs to the pyridoxamine 5'-phosphate oxidase family. Homodimer. FMN is required as a cofactor.

It carries out the reaction pyridoxamine 5'-phosphate + O2 + H2O = pyridoxal 5'-phosphate + H2O2 + NH4(+). The catalysed reaction is pyridoxine 5'-phosphate + O2 = pyridoxal 5'-phosphate + H2O2. It participates in cofactor metabolism; pyridoxal 5'-phosphate salvage; pyridoxal 5'-phosphate from pyridoxamine 5'-phosphate: step 1/1. It functions in the pathway cofactor metabolism; pyridoxal 5'-phosphate salvage; pyridoxal 5'-phosphate from pyridoxine 5'-phosphate: step 1/1. Catalyzes the oxidation of either pyridoxine 5'-phosphate (PNP) or pyridoxamine 5'-phosphate (PMP) into pyridoxal 5'-phosphate (PLP). This is Pyridoxine/pyridoxamine 5'-phosphate oxidase from Escherichia coli O157:H7.